The following is a 461-amino-acid chain: V-type ATP synthase beta chain (461 aa).

The protein belongs to the ATPase alpha/beta chains family.

In terms of biological role, produces ATP from ADP in the presence of a proton gradient across the membrane. The V-type beta chain is a regulatory subunit. This Streptococcus pneumoniae serotype 19F (strain G54) protein is V-type ATP synthase beta chain.